A 349-amino-acid chain; its full sequence is ATP phosphoribosyltransferase regulatory subunit (349 aa).

The segment at 325-349 is disordered; sequence ANGRGRGVRPRRASARGGRAGTRPR. The segment covering 339 to 349 has biased composition (low complexity); that stretch reads ARGGRAGTRPR.

The protein belongs to the class-II aminoacyl-tRNA synthetase family. HisZ subfamily. As to quaternary structure, heteromultimer composed of HisG and HisZ subunits.

The protein localises to the cytoplasm. It functions in the pathway amino-acid biosynthesis; L-histidine biosynthesis; L-histidine from 5-phospho-alpha-D-ribose 1-diphosphate: step 1/9. Required for the first step of histidine biosynthesis. May allow the feedback regulation of ATP phosphoribosyltransferase activity by histidine. The sequence is that of ATP phosphoribosyltransferase regulatory subunit from Anaeromyxobacter dehalogenans (strain 2CP-C).